The following is a 437-amino-acid chain: Sonic hedgehog protein (437 aa).

The signal sequence occupies residues 1-24; the sequence is MLLLLARCFLVILASSLLVCPGLA. Cys-25 carries N-palmitoyl cysteine lipidation. A Cardin-Weintraub motif is present at residues 33-39; sequence KRRHPKK. 7 residues coordinate Ca(2+): Glu-90, Glu-91, Asp-96, Thr-126, Glu-127, Asp-130, and Asp-132. Residues His-141, Asp-148, and His-183 each coordinate Zn(2+). Gly-198 is lipidated: Cholesterol glycine ester. An N-linked (GlcNAc...) asparagine glycan is attached at Asn-279.

The protein belongs to the hedgehog family. In terms of assembly, interacts with HHATL/GUP1 which negatively regulates HHAT-mediated palmitoylation of the SHH N-terminus. Interacts with BOC and CDON. Interacts with HHIP. Interacts with DISP1 via its cholesterol anchor. Interacts with SCUBE2. Interacts with glypican GPC3. Multimer. Post-translationally, the C-terminal domain displays an autoproteolysis activity and a cholesterol transferase activity. Both activities result in the cleavage of the full-length protein and covalent attachment of a cholesterol moiety to the C-terminal of the newly generated N-terminal fragment (ShhN). Cholesterylation is required for the sonic hedgehog protein N-product targeting to lipid rafts and multimerization. ShhN is the active species in both local and long-range signaling, whereas the C-product (ShhC) is degraded in the endoplasmic reticulum. N-palmitoylation by HHAT of ShhN is required for sonic hedgehog protein N-product multimerization and full activity. It is a prerequisite for the membrane-proximal positioning and the subsequent shedding of this N-terminal peptide. In terms of processing, the lipidated N- and C-terminal peptides of ShhNp can be cleaved (shedding). The N-terminal palmitoylated peptide is cleaved at the Cardin-Weintraub (CW) motif site. The cleavage reduced the interactions with heparan sulfate. The cleavage is enhanced by SCUBE2. Expressed in a number of embryonic tissues including the notochord, ventral neural tube, floor plate, lung bud, zone of polarizing activity and posterior distal mesenchyme of limbs. In the adult, expressed in lung and neural retina.

The protein localises to the endoplasmic reticulum membrane. Its subcellular location is the golgi apparatus membrane. It is found in the cell membrane. It carries out the reaction glycyl-L-cysteinyl-[protein] + cholesterol + H(+) = [protein]-C-terminal glycyl cholesterol ester + N-terminal L-cysteinyl-[protein]. In terms of biological role, the C-terminal part of the sonic hedgehog protein precursor displays an autoproteolysis and a cholesterol transferase activity. Both activities result in the cleavage of the full-length protein into two parts (ShhN and ShhC) followed by the covalent attachment of a cholesterol moiety to the C-terminal of the newly generated ShhN. Both activities occur in the reticulum endoplasmic. Once cleaved, ShhC is degraded in the endoplasmic reticulum. Functionally, the dually lipidated sonic hedgehog protein N-product (ShhNp) is a morphogen which is essential for a variety of patterning events during development. Induces ventral cell fate in the neural tube and somites. Involved in the patterning of the anterior-posterior axis of the developing limb bud. Essential for axon guidance. Binds to the patched (PTCH1) receptor, which functions in association with smoothened (SMO), to activate the transcription of target genes. In the absence of SHH, PTCH1 represses the constitutive signaling activity of SMO. The sequence is that of Sonic hedgehog protein from Mus musculus (Mouse).